Reading from the N-terminus, the 274-residue chain is Dermonecrotic toxin LspiSicTox-betaIII1 G (274 aa).

His-5 is an active-site residue. Positions 25 and 27 each coordinate Mg(2+). The Nucleophile role is filled by His-41. 2 disulfide bridges follow: Cys-45–Cys-51 and Cys-47–Cys-189. Asn-66 carries N-linked (GlcNAc...) asparagine glycosylation. Asp-85 contributes to the Mg(2+) binding site.

This sequence belongs to the arthropod phospholipase D family. Class II subfamily. The cofactor is Mg(2+). In terms of tissue distribution, expressed by the venom gland.

It localises to the secreted. It carries out the reaction an N-(acyl)-sphingosylphosphocholine = an N-(acyl)-sphingosyl-1,3-cyclic phosphate + choline. The catalysed reaction is an N-(acyl)-sphingosylphosphoethanolamine = an N-(acyl)-sphingosyl-1,3-cyclic phosphate + ethanolamine. It catalyses the reaction a 1-acyl-sn-glycero-3-phosphocholine = a 1-acyl-sn-glycero-2,3-cyclic phosphate + choline. The enzyme catalyses a 1-acyl-sn-glycero-3-phosphoethanolamine = a 1-acyl-sn-glycero-2,3-cyclic phosphate + ethanolamine. Dermonecrotic toxins cleave the phosphodiester linkage between the phosphate and headgroup of certain phospholipids (sphingolipid and lysolipid substrates), forming an alcohol (often choline) and a cyclic phosphate. This toxin acts on sphingomyelin (SM). It may also act on ceramide phosphoethanolamine (CPE), lysophosphatidylcholine (LPC) and lysophosphatidylethanolamine (LPE), but not on lysophosphatidylserine (LPS), and lysophosphatidylglycerol (LPG). It acts by transphosphatidylation, releasing exclusively cyclic phosphate products as second products. Induces dermonecrosis, hemolysis, increased vascular permeability, edema, inflammatory response, and platelet aggregation. This chain is Dermonecrotic toxin LspiSicTox-betaIII1 G, found in Loxosceles spinulosa (Recluse spider).